Here is a 1309-residue protein sequence, read N- to C-terminus: Mediator of RNA polymerase II transcription subunit 33A (1309 aa).

A disordered region spans residues 809 to 829; that stretch reads QTLNPVNSGTSSSSGAASEDS. Over residues 816-826 the composition is skewed to low complexity; that stretch reads SGTSSSSGAAS.

It belongs to the Mediator complex subunit 33 family. In terms of assembly, component of the Mediator complex.

The protein localises to the nucleus. Its function is as follows. Component of the Mediator complex, a coactivator involved in the regulated transcription of nearly all RNA polymerase II-dependent genes. Mediator functions as a bridge to convey information from gene-specific regulatory proteins to the basal RNA polymerase II transcription machinery. The Mediator complex, having a compact conformation in its free form, is recruited to promoters by direct interactions with regulatory proteins and serves for the assembly of a functional preinitiation complex with RNA polymerase II and the general transcription factors. Involved in the repression of phenylpropanoid biosynthesis. May compete with MED33B for common binding partners or for occupancy in Mediator. The chain is Mediator of RNA polymerase II transcription subunit 33A (MED33A) from Arabidopsis thaliana (Mouse-ear cress).